The sequence spans 276 residues: Undecaprenyl-diphosphatase 1 (276 aa).

6 consecutive transmembrane segments (helical) span residues 43–63 (RAMA…VWEF), 85–105 (ANLL…ADLI), 109–129 (LFNP…MLWA), 184–204 (ATEF…VYSG), 214–234 (ADFP…MIAV), and 254–274 (IVFG…WTAA).

This sequence belongs to the UppP family.

Its subcellular location is the cell inner membrane. The catalysed reaction is di-trans,octa-cis-undecaprenyl diphosphate + H2O = di-trans,octa-cis-undecaprenyl phosphate + phosphate + H(+). In terms of biological role, catalyzes the dephosphorylation of undecaprenyl diphosphate (UPP). Confers resistance to bacitracin. This is Undecaprenyl-diphosphatase 1 from Pseudomonas fluorescens (strain Pf0-1).